Here is a 399-residue protein sequence, read N- to C-terminus: Acetate kinase 2 (399 aa).

Asn10 contributes to the Mg(2+) binding site. Lys17 is a binding site for ATP. Residue Arg89 coordinates substrate. Catalysis depends on Asp146, which acts as the Proton donor/acceptor. ATP is bound by residues 206-210, 281-283, and 329-333; these read HLGNG, DCR, and GIGEN. Glu384 lines the Mg(2+) pocket.

It belongs to the acetokinase family. In terms of assembly, homodimer. Requires Mg(2+) as cofactor. The cofactor is Mn(2+).

It is found in the cytoplasm. It carries out the reaction acetate + ATP = acetyl phosphate + ADP. Its pathway is metabolic intermediate biosynthesis; acetyl-CoA biosynthesis; acetyl-CoA from acetate: step 1/2. Its function is as follows. Catalyzes the formation of acetyl phosphate from acetate and ATP. Can also catalyze the reverse reaction. This chain is Acetate kinase 2, found in Neisseria meningitidis serogroup B (strain ATCC BAA-335 / MC58).